The chain runs to 546 residues: Low-affinity methionine permease (546 aa).

The Extracellular segment spans residues 1–70; the sequence is MEPLLFNSGK…QGRHLGVFST (70 aa). The chain crosses the membrane as a helical span at residues 71–91; that stretch reads VVLFVSRIMGSGIFAVPSVIL. Residues 92 to 98 lie on the Cytoplasmic side of the membrane; sequence LNTGGNK. A helical membrane pass occupies residues 99–119; it reads LIYFAIWVFSAAIAFAGLYLF. The Extracellular segment spans residues 120-148; that stretch reads LEFGSWIPKSGGRKNFLERSFERPRLLIS. The chain crosses the membrane as a helical span at residues 149–169; sequence VVFSCYSVLTGYALTGSIVFG. The Cytoplasmic segment spans residues 170-188; it reads KYVLSAFGVTDDSWSKYVS. A helical membrane pass occupies residues 189 to 209; that stretch reads ISFIIFAVLIHGVSVRHGVFI. Residues 210 to 213 lie on the Extracellular side of the membrane; that stretch reads QNAL. A helical transmembrane segment spans residues 214–234; sequence GGLKLIMIVLMCFAGLYTLFF. Residues 235–254 lie on the Cytoplasmic side of the membrane; that stretch reads YKSTGQVAWDLPVTQVEKDS. A helical transmembrane segment spans residues 255-275; it reads LLSVSSIATAFISSFFCFSGW. Over 276–297 the chain is Extracellular; sequence DTVHTVTSEIKNPVKTLKVSGP. Residues 298-318 traverse the membrane as a helical segment; that stretch reads LSLIICFVCYTMMNVAYLKVL. Residue threonine 319 is a topological domain, cytoplasmic. A helical transmembrane segment spans residues 320-340; that stretch reads YEEIVSAGPLVGSVLFTKLFG. At 341–346 the chain is on the extracellular side; sequence PRVGGK. The chain crosses the membrane as a helical span at residues 347–367; the sequence is FIAFSIAISAASNILVVIYSI. The Cytoplasmic portion of the chain corresponds to 368-393; the sequence is SRVNQEIFKEGYLPFSIHMSKNWPFD. Residues 394-414 form a helical membrane-spanning segment; it reads APLPSISLCGFITIAWILILP. Residues 415-423 are Extracellular-facing; it reads KEGESFNYL. Residues 424 to 444 traverse the membrane as a helical segment; sequence VSMDGYGNQFFLLLVAIGLFI. Residues 445-459 lie on the Cytoplasmic side of the membrane; the sequence is WRFKHKNEVPEIRAS. Residues 460-480 traverse the membrane as a helical segment; sequence TFGVLAIITLSLYMLMAPFFA. At 481–494 the chain is on the extracellular side; the sequence is DPSLNRVGFLPPYQ. Residues 495-515 form a helical membrane-spanning segment; it reads IMSLLVIVACFFFWLVKFVLL. Over 516 to 546 the chain is Cytoplasmic; sequence PKFFHYKLLPKITYLHDGLIVTEWVKKPCLC.

The protein to yeast high affinity methionine permease (MUP1).

The protein localises to the membrane. Very low affinity permease for methionine. The sequence is that of Low-affinity methionine permease (MUP3) from Saccharomyces cerevisiae (strain ATCC 204508 / S288c) (Baker's yeast).